Here is a 317-residue protein sequence, read N- to C-terminus: Ribosomal protein L11 methyltransferase (317 aa).

S-adenosyl-L-methionine contacts are provided by threonine 158, glycine 179, aspartate 201, and asparagine 244.

This sequence belongs to the methyltransferase superfamily. PrmA family.

It localises to the cytoplasm. The enzyme catalyses L-lysyl-[protein] + 3 S-adenosyl-L-methionine = N(6),N(6),N(6)-trimethyl-L-lysyl-[protein] + 3 S-adenosyl-L-homocysteine + 3 H(+). Methylates ribosomal protein L11. In Streptococcus agalactiae serotype Ia (strain ATCC 27591 / A909 / CDC SS700), this protein is Ribosomal protein L11 methyltransferase.